The primary structure comprises 181 residues: TATA-box-binding protein (181 aa).

A run of 2 repeats spans residues 7–83 (IVNV…IKEL) and 98–173 (VQNM…SKTL).

Belongs to the TBP family.

General factor that plays a role in the activation of archaeal genes transcribed by RNA polymerase. Binds specifically to the TATA box promoter element which lies close to the position of transcription initiation. The sequence is that of TATA-box-binding protein from Methanococcus maripaludis (strain C6 / ATCC BAA-1332).